A 572-amino-acid polypeptide reads, in one-letter code: Urease subunit alpha (572 aa).

The Urease domain occupies 136-572 (GGIDTHIHWI…VPLAQRYFLF (437 aa)). Histidine 141, histidine 143, and lysine 224 together coordinate Ni(2+). Lysine 224 is subject to N6-carboxylysine. Histidine 226 contacts substrate. Residues histidine 253 and histidine 279 each contribute to the Ni(2+) site. The active-site Proton donor is histidine 327. Aspartate 367 contacts Ni(2+).

Belongs to the metallo-dependent hydrolases superfamily. Urease alpha subunit family. In terms of assembly, heterotrimer of UreA (gamma), UreB (beta) and UreC (alpha) subunits. Three heterotrimers associate to form the active enzyme. Ni cation serves as cofactor. Carboxylation allows a single lysine to coordinate two nickel ions.

It localises to the cytoplasm. The enzyme catalyses urea + 2 H2O + H(+) = hydrogencarbonate + 2 NH4(+). Its pathway is nitrogen metabolism; urea degradation; CO(2) and NH(3) from urea (urease route): step 1/1. This Actinobacillus pleuropneumoniae (Haemophilus pleuropneumoniae) protein is Urease subunit alpha.